The sequence spans 158 residues: MAKRSNTTMTSAGLQLGREVAPPDSPETAKLDRVPNPQRDTDYLARFTVPEFTSLCPVTGQPDFAHLVIDYAPGPWLVESKSLKLYLASFRNHGAFHEDCTVAIGKRLTAEIKPKWLRIGGYWYPRGGIPIDVFWQTGRLPKGLWVPDQGVAPYRGRG.

Over residues 1–13 the composition is skewed to polar residues; the sequence is MAKRSNTTMTSAG. The tract at residues 1-37 is disordered; that stretch reads MAKRSNTTMTSAGLQLGREVAPPDSPETAKLDRVPNP. A compositionally biased stretch (basic and acidic residues) spans 27 to 37; the sequence is ETAKLDRVPNP. C56 functions as the Thioimide intermediate in the catalytic mechanism. D63 acts as the Proton donor in catalysis. Residues 78–80 and 97–98 each bind substrate; these read VES and HE.

It belongs to the GTP cyclohydrolase I family. QueF type 1 subfamily.

It localises to the cytoplasm. The enzyme catalyses 7-aminomethyl-7-carbaguanine + 2 NADP(+) = 7-cyano-7-deazaguanine + 2 NADPH + 3 H(+). The protein operates within tRNA modification; tRNA-queuosine biosynthesis. In terms of biological role, catalyzes the NADPH-dependent reduction of 7-cyano-7-deazaguanine (preQ0) to 7-aminomethyl-7-deazaguanine (preQ1). This Bradyrhizobium sp. (strain ORS 278) protein is NADPH-dependent 7-cyano-7-deazaguanine reductase.